The chain runs to 369 residues: Serine proteinase inhibitor 1 (369 aa).

This sequence belongs to the serpin family. Poxviruses subfamily.

Functionally, important in virulence. The chain is Serine proteinase inhibitor 1 (SPI-1) from Oryctolagus cuniculus (Rabbit).